Reading from the N-terminus, the 243-residue chain is 7-carboxy-7-deazaguanine synthase (243 aa).

Substrate contacts are provided by residues 15 to 17 and Arg30; that span reads IQG. One can recognise a Radical SAM core domain in the interval 21 to 239; the sequence is VIGQKTMFVR…PQLHTLLWGN (219 aa). [4Fe-4S] cluster is bound by residues Cys34, Cys38, and Cys41. Position 43 (Ser43) interacts with Mg(2+). Ser81 contacts substrate. S-adenosyl-L-methionine-binding positions include Gly83 and 127–129; that span reads SPK.

Belongs to the radical SAM superfamily. 7-carboxy-7-deazaguanine synthase family. Homodimer. [4Fe-4S] cluster serves as cofactor. It depends on S-adenosyl-L-methionine as a cofactor. The cofactor is Mg(2+).

The catalysed reaction is 6-carboxy-5,6,7,8-tetrahydropterin + H(+) = 7-carboxy-7-deazaguanine + NH4(+). Its pathway is purine metabolism; 7-cyano-7-deazaguanine biosynthesis. Its function is as follows. Catalyzes the complex heterocyclic radical-mediated conversion of 6-carboxy-5,6,7,8-tetrahydropterin (CPH4) to 7-carboxy-7-deazaguanine (CDG), a step common to the biosynthetic pathways of all 7-deazapurine-containing compounds. The protein is 7-carboxy-7-deazaguanine synthase of Bacillus subtilis (strain 168).